The chain runs to 141 residues: HTH-type transcriptional regulator LrpA (141 aa).

In terms of domain architecture, HTH asnC-type spans 2-63 (VDERDKIILD…KINPKKLGYS (62 aa)). Residues 21 to 40 (FTEIAKILGISETAVRKRVK) constitute a DNA-binding region (H-T-H motif).

Homooctamer; tetramer of dimers.

Its function is as follows. DNA-binding protein that negatively regulates its own transcription. Interferes with RNA polymerase (RNAP) recruitment by inhibiting the association of RNAP with the TBP-TFB promoter complex. The chain is HTH-type transcriptional regulator LrpA (lrpA) from Pyrococcus abyssi (strain GE5 / Orsay).